Reading from the N-terminus, the 247-residue chain is Homeobox-leucine zipper protein HOX17 (247 aa).

The segment at 58–81 (ERAGLRGGGGSDEEDGGCGIDGSR) is disordered. Positions 79–138 (GSRKKLRLSKDQSAVLEDSFREHPTLNPRQKATLAQQLGLRPRQVEVWFQNRRARTKLKQ) form a DNA-binding region, homeobox. Positions 137 to 182 (KQTEVDCEFLKRCCETLTEENRRLQKEVQELRALKLVSPHLYMNMS) are leucine-zipper.

This sequence belongs to the HD-ZIP homeobox family. Class II subfamily. In terms of tissue distribution, expressed in seedlings, roots, stems, leaf sheaths and blades and panicles.

Its subcellular location is the nucleus. Probable transcription factor. This chain is Homeobox-leucine zipper protein HOX17 (HOX17), found in Oryza sativa subsp. japonica (Rice).